Reading from the N-terminus, the 381-residue chain is Alkanesulfonate monooxygenase (381 aa).

The protein belongs to the SsuD family. In terms of assembly, homotetramer.

The catalysed reaction is an alkanesulfonate + FMNH2 + O2 = an aldehyde + FMN + sulfite + H2O + 2 H(+). Catalyzes the desulfonation of aliphatic sulfonates. The chain is Alkanesulfonate monooxygenase from Escherichia coli O6:H1 (strain CFT073 / ATCC 700928 / UPEC).